The chain runs to 471 residues: Fructokinase-like 1, chloroplastic (471 aa).

The transit peptide at 1–38 directs the protein to the chloroplast; it reads MASLLIFPHLHHFDSSLDRREVLVVRHSQASRRFLTPK. The segment at 36–85 is disordered; sequence TPKASINGSGITNGAAAETTSKPSRKGRKKKQTSTVIEKDNTETDPELNP. A compositionally biased stretch (polar residues) spans 39–57; sequence ASINGSGITNGAAAETTSK. Positions 58–67 are enriched in basic residues; it reads PSRKGRKKKQ.

It belongs to the carbohydrate kinase PfkB family. In terms of assembly, interacts with CITRX/TRXz. Interacts with PTAC7. Self-interacts. Binds to FLN2. Associates with the plastid-encoded RNA polymerase (PEP) complex.

Its subcellular location is the plastid. It localises to the chloroplast. In terms of biological role, required for proper chloroplast development, most likely through regulating plastid-encoded polymerase (PEP) dependent chloroplast transcription. Acts as a component of the transcriptionally active plastid chromosome that is required for plastid gene expression. This chain is Fructokinase-like 1, chloroplastic, found in Arabidopsis thaliana (Mouse-ear cress).